We begin with the raw amino-acid sequence, 135 residues long: Cystatin-1 (135 aa).

The N-terminal stretch at 1–24 is a signal peptide; the sequence is MRKHRIVSLVAALLVLLALAAVSS. A Secondary area of contact motif is present at residues 86-90; it reads QVVAG.

It belongs to the cystatin family. Phytocystatin subfamily.

The chain is Cystatin-1 (RAMDAZC7) from Zea mays (Maize).